We begin with the raw amino-acid sequence, 106 residues long: Nucleoid-associated protein MCCL_1934 (106 aa).

Residues 1-34 are disordered; it reads MRGGGNMQQMMKQMQKMQKKMAEEQEKLKEERIE. Over residues 7–16 the composition is skewed to low complexity; the sequence is MQQMMKQMQK. A compositionally biased stretch (basic and acidic residues) spans 20-34; sequence KMAEEQEKLKEERIE.

The protein belongs to the YbaB/EbfC family. Homodimer.

It is found in the cytoplasm. Its subcellular location is the nucleoid. Its function is as follows. Binds to DNA and alters its conformation. May be involved in regulation of gene expression, nucleoid organization and DNA protection. The sequence is that of Nucleoid-associated protein MCCL_1934 from Macrococcus caseolyticus (strain JCSC5402) (Macrococcoides caseolyticum).